The sequence spans 101 residues: Large ribosomal subunit protein eL30 (101 aa).

Belongs to the eukaryotic ribosomal protein eL30 family.

This Pyrobaculum calidifontis (strain DSM 21063 / JCM 11548 / VA1) protein is Large ribosomal subunit protein eL30.